The primary structure comprises 324 residues: tRNA U34 carboxymethyltransferase (324 aa).

Carboxy-S-adenosyl-L-methionine is bound by residues Lys92, Trp106, Lys111, Gly131, 153–155, 181–182, Met197, Tyr201, and Arg316; these read DPT and IE.

Belongs to the class I-like SAM-binding methyltransferase superfamily. CmoB family. In terms of assembly, homotetramer.

The catalysed reaction is carboxy-S-adenosyl-L-methionine + 5-hydroxyuridine(34) in tRNA = 5-carboxymethoxyuridine(34) in tRNA + S-adenosyl-L-homocysteine + H(+). In terms of biological role, catalyzes carboxymethyl transfer from carboxy-S-adenosyl-L-methionine (Cx-SAM) to 5-hydroxyuridine (ho5U) to form 5-carboxymethoxyuridine (cmo5U) at position 34 in tRNAs. This Methylococcus capsulatus (strain ATCC 33009 / NCIMB 11132 / Bath) protein is tRNA U34 carboxymethyltransferase.